Here is a 134-residue protein sequence, read N- to C-terminus: Isocitrate dehydrogenase [NAD] subunit alpha, mitochondrial (134 aa).

Residue Lys37 is modified to N6-succinyllysine. Thr50 is subject to Phosphothreonine. Positions 64, 74, and 95 each coordinate substrate.

Belongs to the isocitrate and isopropylmalate dehydrogenases family. As to quaternary structure, heterooligomer of subunits alpha (IDH3A), beta (IDH3B), and gamma (IDH3G) in the apparent ratio of 2:1:1. The heterodimer containing one IDH3A and one IDH3B subunit and the heterodimer containing one IDH3A and one IDH3G subunit assemble into a heterotetramer (which contains two subunits of IDH3A, one of IDH3B and one of IDH3G) and further into the heterooctamer. Mg(2+) serves as cofactor. It depends on Mn(2+) as a cofactor.

It localises to the mitochondrion. It catalyses the reaction D-threo-isocitrate + NAD(+) = 2-oxoglutarate + CO2 + NADH. The heterotetramer and the heterodimer composed of IDH3A and IDH3G subunits can be allosterically activated by citrate (CIT) or/and ADP, and the two activators can act independently or synergistically. The heterodimer composed of IDH3A and IDH3B subunits cannot be allosterically regulated and the allosteric regulation of the heterotetramer is through the IDH3G subunit and not the IDH3B subunit. The IDH3G subunit contains the allosteric site which consists of a CIT-binding site and an ADP-binding site, and the binding of CIT and ADP causes conformational changes at the allosteric site which are transmitted to the active site in the catalytic subunit (IDH3A) through a cascade of conformational changes at the heterodimer interface, leading to stabilization of the isocitrate-binding at the active site and thus activation of the enzyme. ATP can activate the heterotetramer and the heterodimer composed of IDH3A and IDH3G subunits at low concentrations but inhibits their activities at high concentrations, whereas ATP exhibits only inhibitory effect on the heterodimer composed of IDH3A and IDH3B subunits. In terms of biological role, catalytic subunit of the enzyme which catalyzes the decarboxylation of isocitrate (ICT) into alpha-ketoglutarate. The heterodimer composed of the alpha (IDH3A) and beta (IDH3B) subunits and the heterodimer composed of the alpha (IDH3A) and gamma (IDH3G) subunits, have considerable basal activity but the full activity of the heterotetramer (containing two subunits of IDH3A, one of IDH3B and one of IDH3G) requires the assembly and cooperative function of both heterodimers. The polypeptide is Isocitrate dehydrogenase [NAD] subunit alpha, mitochondrial (Mesocricetus auratus (Golden hamster)).